An 85-amino-acid polypeptide reads, in one-letter code: Beta-insect depressant toxin BmKITb (85 aa).

The first 21 residues, 1–21 (MKLFLLLVISASMLIDGLVNA), serve as a signal peptide directing secretion. An LCN-type CS-alpha/beta domain is found at 22-82 (DGYIRGSNGC…TWKSESNTCG (61 aa)). 4 disulfides stabilise this stretch: cysteine 31-cysteine 81, cysteine 35-cysteine 56, cysteine 42-cysteine 63, and cysteine 46-cysteine 65. Glycine 82 is subject to Glycine amide.

In terms of tissue distribution, expressed by the venom gland.

The protein localises to the secreted. Functionally, depressant insect beta-toxins cause a transient contraction paralysis followed by a slow flaccid paralysis. They bind voltage-independently at site-4 of sodium channels (Nav) and shift the voltage of activation toward more negative potentials thereby affecting sodium channel activation and promoting spontaneous and repetitive firing. However, this toxin has some characteristics of excitatory toxins such as bursts of activity after the membrane has been hyperpolarized. This toxin is active only on insects. The polypeptide is Beta-insect depressant toxin BmKITb (Olivierus martensii (Manchurian scorpion)).